Here is a 346-residue protein sequence, read N- to C-terminus: Phosphoribosylformylglycinamidine cyclo-ligase (346 aa).

It belongs to the AIR synthase family.

The protein localises to the cytoplasm. The enzyme catalyses 2-formamido-N(1)-(5-O-phospho-beta-D-ribosyl)acetamidine + ATP = 5-amino-1-(5-phospho-beta-D-ribosyl)imidazole + ADP + phosphate + H(+). It participates in purine metabolism; IMP biosynthesis via de novo pathway; 5-amino-1-(5-phospho-D-ribosyl)imidazole from N(2)-formyl-N(1)-(5-phospho-D-ribosyl)glycinamide: step 2/2. This is Phosphoribosylformylglycinamidine cyclo-ligase from Shewanella pealeana (strain ATCC 700345 / ANG-SQ1).